A 407-amino-acid chain; its full sequence is Eukaryotic initiation factor 4A-II (407 aa).

The interval 1–23 is disordered; sequence MSGGSADYSRDHGGPEGMEPDGV. Positions 33–61 match the Q motif motif; it reads DNFDDMNLKESLLRGIYAYGFEKPSAIQQ. In terms of domain architecture, Helicase ATP-binding spans 64–235; it reads IIPCIKGYDV…KKFMREPIRI (172 aa). 77–84 lines the ATP pocket; the sequence is AQSGTGKT. Residues 183 to 186 carry the DEAD box motif; sequence DEAD. The 162-residue stretch at 246 to 407 folds into the Helicase C-terminal domain; that stretch reads GIKQFYINVE…EMPMNVADLI (162 aa).

Belongs to the DEAD box helicase family. eIF4A subfamily. EIF4F is a multi-subunit complex, the composition of which varies with external and internal environmental conditions. It is composed of at least EIF4A, EIF4E and EIF4G1/EIFFG3. Interacts with EIF4E.

The enzyme catalyses ATP + H2O = ADP + phosphate + H(+). Its function is as follows. ATP-dependent RNA helicase which is a subunit of the eIF4F complex involved in cap recognition and is required for mRNA binding to ribosome. In the current model of translation initiation, eIF4A unwinds RNA secondary structures in the 5'-UTR of mRNAs which is necessary to allow efficient binding of the small ribosomal subunit, and subsequent scanning for the initiator codon. The polypeptide is Eukaryotic initiation factor 4A-II (EIF4A2) (Gallus gallus (Chicken)).